The primary structure comprises 297 residues: Tyrosine recombinase XerD (297 aa).

The 87-residue stretch at 1–87 (MLEYAIEDFF…SIRSFHQFLI (87 aa)) folds into the Core-binding (CB) domain. One can recognise a Tyr recombinase domain in the interval 108 to 291 (KLPDILSQDE…TKARLKDMYQ (184 aa)). Active-site residues include R147, K171, H243, R246, and H269. Y278 acts as the O-(3'-phospho-DNA)-tyrosine intermediate in catalysis.

Belongs to the 'phage' integrase family. XerD subfamily. In terms of assembly, forms a cyclic heterotetrameric complex composed of two molecules of XerC and two molecules of XerD.

The protein localises to the cytoplasm. Site-specific tyrosine recombinase, which acts by catalyzing the cutting and rejoining of the recombining DNA molecules. The XerC-XerD complex is essential to convert dimers of the bacterial chromosome into monomers to permit their segregation at cell division. It also contributes to the segregational stability of plasmids. This Oceanobacillus iheyensis (strain DSM 14371 / CIP 107618 / JCM 11309 / KCTC 3954 / HTE831) protein is Tyrosine recombinase XerD.